A 238-amino-acid polypeptide reads, in one-letter code: Ribonuclease PH (238 aa).

Phosphate contacts are provided by residues Arg86 and 124 to 126 (GTR).

This sequence belongs to the RNase PH family. Homohexameric ring arranged as a trimer of dimers.

It carries out the reaction tRNA(n+1) + phosphate = tRNA(n) + a ribonucleoside 5'-diphosphate. Functionally, phosphorolytic 3'-5' exoribonuclease that plays an important role in tRNA 3'-end maturation. Removes nucleotide residues following the 3'-CCA terminus of tRNAs; can also add nucleotides to the ends of RNA molecules by using nucleoside diphosphates as substrates, but this may not be physiologically important. Probably plays a role in initiation of 16S rRNA degradation (leading to ribosome degradation) during starvation. This Geotalea uraniireducens (strain Rf4) (Geobacter uraniireducens) protein is Ribonuclease PH.